Reading from the N-terminus, the 101-residue chain is Aspartyl/glutamyl-tRNA(Asn/Gln) amidotransferase subunit C (101 aa).

This sequence belongs to the GatC family. Heterotrimer of A, B and C subunits.

The enzyme catalyses L-glutamyl-tRNA(Gln) + L-glutamine + ATP + H2O = L-glutaminyl-tRNA(Gln) + L-glutamate + ADP + phosphate + H(+). It catalyses the reaction L-aspartyl-tRNA(Asn) + L-glutamine + ATP + H2O = L-asparaginyl-tRNA(Asn) + L-glutamate + ADP + phosphate + 2 H(+). In terms of biological role, allows the formation of correctly charged Asn-tRNA(Asn) or Gln-tRNA(Gln) through the transamidation of misacylated Asp-tRNA(Asn) or Glu-tRNA(Gln) in organisms which lack either or both of asparaginyl-tRNA or glutaminyl-tRNA synthetases. The reaction takes place in the presence of glutamine and ATP through an activated phospho-Asp-tRNA(Asn) or phospho-Glu-tRNA(Gln). This chain is Aspartyl/glutamyl-tRNA(Asn/Gln) amidotransferase subunit C, found in Lactobacillus delbrueckii subsp. bulgaricus (strain ATCC 11842 / DSM 20081 / BCRC 10696 / JCM 1002 / NBRC 13953 / NCIMB 11778 / NCTC 12712 / WDCM 00102 / Lb 14).